The following is a 154-amino-acid chain: Small ribosomal subunit protein uS19B (154 aa).

Residue S63 is modified to Phosphoserine.

The protein belongs to the universal ribosomal protein uS19 family. In terms of assembly, component of the small ribosomal subunit (SSU). Mature yeast ribosomes consist of a small (40S) and a large (60S) subunit. The 40S small subunit contains 1 molecule of ribosomal RNA (18S rRNA) and at least 33 different proteins. The large 60S subunit contains 3 rRNA molecules (25S, 5.8S and 5S rRNA) and at least 46 different proteins.

The protein resides in the cytoplasm. It is found in the nucleus. Its subcellular location is the nucleolus. Component of the ribosome, a large ribonucleoprotein complex responsible for the synthesis of proteins in the cell. The small ribosomal subunit (SSU) binds messenger RNAs (mRNAs) and translates the encoded message by selecting cognate aminoacyl-transfer RNA (tRNA) molecules. The large subunit (LSU) contains the ribosomal catalytic site termed the peptidyl transferase center (PTC), which catalyzes the formation of peptide bonds, thereby polymerizing the amino acids delivered by tRNAs into a polypeptide chain. The nascent polypeptides leave the ribosome through a tunnel in the LSU and interact with protein factors that function in enzymatic processing, targeting, and the membrane insertion of nascent chains at the exit of the ribosomal tunnel. uS19 is involved in the nuclear export of the small ribosomal subunit precursor. Has a role in the late stage of the assembly of pre-40S particles within the nucleus and controls their export to the cytoplasm. This chain is Small ribosomal subunit protein uS19B (rps1502), found in Schizosaccharomyces pombe (strain 972 / ATCC 24843) (Fission yeast).